We begin with the raw amino-acid sequence, 89 residues long: Small ribosomal subunit protein uS15 (89 aa).

The protein belongs to the universal ribosomal protein uS15 family. In terms of assembly, part of the 30S ribosomal subunit. Forms a bridge to the 50S subunit in the 70S ribosome, contacting the 23S rRNA.

Its function is as follows. One of the primary rRNA binding proteins, it binds directly to 16S rRNA where it helps nucleate assembly of the platform of the 30S subunit by binding and bridging several RNA helices of the 16S rRNA. Forms an intersubunit bridge (bridge B4) with the 23S rRNA of the 50S subunit in the ribosome. This is Small ribosomal subunit protein uS15 from Vibrio atlanticus (strain LGP32) (Vibrio splendidus (strain Mel32)).